The primary structure comprises 263 residues: Chymotrypsinogen 2 (263 aa).

Residues 1 to 18 (MAFLWLLSCFALLGTAFG) form the signal peptide. 5 disulfides stabilise this stretch: Cys-19–Cys-140, Cys-60–Cys-76, Cys-154–Cys-219, Cys-186–Cys-200, and Cys-209–Cys-238. Residues 34 to 261 (IVNGEDAVPG…LIPWVQQILQ (228 aa)) form the Peptidase S1 domain. His-75 acts as the Charge relay system in catalysis. Ser-93 carries the phosphoserine modification. Asp-120 functions as the Charge relay system in the catalytic mechanism. The active-site Charge relay system is Ser-213.

This sequence belongs to the peptidase S1 family.

The protein localises to the secreted. It is found in the extracellular space. It catalyses the reaction Preferential cleavage: Tyr-|-Xaa, Trp-|-Xaa, Phe-|-Xaa, Leu-|-Xaa.. In Canis lupus familiaris (Dog), this protein is Chymotrypsinogen 2 (CTRB1).